The sequence spans 521 residues: Probable protein kinase UbiB (521 aa).

In terms of domain architecture, Protein kinase spans 119–497 (SFEREPVASA…QKLTNRLLQA (379 aa)). ATP contacts are provided by residues 125–133 (VASASIAQV) and Lys-151. Asp-286 acts as the Proton acceptor in catalysis. Residues 496–516 (QAIVSAGIGFVIALILLQLVV) form a helical membrane-spanning segment.

This sequence belongs to the ABC1 family. UbiB subfamily.

It is found in the cell inner membrane. It participates in cofactor biosynthesis; ubiquinone biosynthesis [regulation]. Its function is as follows. Is probably a protein kinase regulator of UbiI activity which is involved in aerobic coenzyme Q (ubiquinone) biosynthesis. In Delftia acidovorans (strain DSM 14801 / SPH-1), this protein is Probable protein kinase UbiB.